The chain runs to 79 residues: MDDIETRVRKLVAARFGVEECDIRLDSDFRNDFGAESLEVVELVMALEAEFGVEIADDDAERIETVRQAIDYLEEAVPT.

The Carrier domain maps to 2-77 (DDIETRVRKL…QAIDYLEEAV (76 aa)). S37 bears the O-(pantetheine 4'-phosphoryl)serine mark.

This sequence belongs to the acyl carrier protein (ACP) family. Post-translationally, 4'-phosphopantetheine is transferred from CoA to a specific serine of apo-ACP by AcpS. This modification is essential for activity because fatty acids are bound in thioester linkage to the sulfhydryl of the prosthetic group.

It is found in the cytoplasm. It participates in lipid metabolism; fatty acid biosynthesis. In terms of biological role, carrier of the growing fatty acid chain in fatty acid biosynthesis. This Pseudomonas aeruginosa (strain ATCC 15692 / DSM 22644 / CIP 104116 / JCM 14847 / LMG 12228 / 1C / PRS 101 / PAO1) protein is Acyl carrier protein 2.